Here is a 149-residue protein sequence, read N- to C-terminus: Ribosomal RNA large subunit methyltransferase H (149 aa).

S-adenosyl-L-methionine contacts are provided by residues Leu71, Gly98, and 117 to 122 (LSKMTL).

This sequence belongs to the RNA methyltransferase RlmH family. Homodimer.

The protein resides in the cytoplasm. The catalysed reaction is pseudouridine(1915) in 23S rRNA + S-adenosyl-L-methionine = N(3)-methylpseudouridine(1915) in 23S rRNA + S-adenosyl-L-homocysteine + H(+). Its function is as follows. Specifically methylates the pseudouridine at position 1915 (m3Psi1915) in 23S rRNA. The sequence is that of Ribosomal RNA large subunit methyltransferase H from Campylobacter fetus subsp. fetus (strain 82-40).